The sequence spans 201 residues: Pyridoxal 5'-phosphate synthase subunit PdxT (201 aa).

50-52 (GES) provides a ligand contact to L-glutamine. Cys82 serves as the catalytic Nucleophile. Residues Arg115 and 143 to 144 (IR) contribute to the L-glutamine site. Catalysis depends on charge relay system residues His179 and Glu181.

Belongs to the glutaminase PdxT/SNO family. As to quaternary structure, in the presence of PdxS, forms a dodecamer of heterodimers. Only shows activity in the heterodimer.

It carries out the reaction aldehydo-D-ribose 5-phosphate + D-glyceraldehyde 3-phosphate + L-glutamine = pyridoxal 5'-phosphate + L-glutamate + phosphate + 3 H2O + H(+). The catalysed reaction is L-glutamine + H2O = L-glutamate + NH4(+). It participates in cofactor biosynthesis; pyridoxal 5'-phosphate biosynthesis. Catalyzes the hydrolysis of glutamine to glutamate and ammonia as part of the biosynthesis of pyridoxal 5'-phosphate. The resulting ammonia molecule is channeled to the active site of PdxS. This chain is Pyridoxal 5'-phosphate synthase subunit PdxT, found in Deinococcus geothermalis (strain DSM 11300 / CIP 105573 / AG-3a).